Reading from the N-terminus, the 292-residue chain is Pyridoxal 5'-phosphate synthase subunit PdxS (292 aa).

D-ribose 5-phosphate is bound at residue aspartate 22. Catalysis depends on lysine 79, which acts as the Schiff-base intermediate with D-ribose 5-phosphate. Residue glycine 151 participates in D-ribose 5-phosphate binding. Arginine 163 contacts D-glyceraldehyde 3-phosphate. D-ribose 5-phosphate-binding positions include glycine 212 and 233–234 (GS).

The protein belongs to the PdxS/SNZ family. In the presence of PdxT, forms a dodecamer of heterodimers.

The enzyme catalyses aldehydo-D-ribose 5-phosphate + D-glyceraldehyde 3-phosphate + L-glutamine = pyridoxal 5'-phosphate + L-glutamate + phosphate + 3 H2O + H(+). Its pathway is cofactor biosynthesis; pyridoxal 5'-phosphate biosynthesis. In terms of biological role, catalyzes the formation of pyridoxal 5'-phosphate from ribose 5-phosphate (RBP), glyceraldehyde 3-phosphate (G3P) and ammonia. The ammonia is provided by the PdxT subunit. Can also use ribulose 5-phosphate and dihydroxyacetone phosphate as substrates, resulting from enzyme-catalyzed isomerization of RBP and G3P, respectively. The polypeptide is Pyridoxal 5'-phosphate synthase subunit PdxS (Thermoanaerobacter pseudethanolicus (strain ATCC 33223 / 39E) (Clostridium thermohydrosulfuricum)).